A 290-amino-acid chain; its full sequence is GTPase Era (290 aa).

An Era-type G domain is found at 2–169 (KSGFVSIIGR…KDKIYANLQE (168 aa)). The tract at residues 10-17 (GRPSTGKS) is G1. 10 to 17 (GRPSTGKS) is a binding site for GTP. The G2 stretch occupies residues 36-40 (QTTRN). A G3 region spans residues 57–60 (DTPG). GTP is bound by residues 57 to 61 (DTPGF) and 119 to 122 (NKID). The interval 119 to 122 (NKID) is G4. The interval 148–150 (ISA) is G5. Residues 200–276 (LKEELPYSLY…DLFLQVKLRK (77 aa)) enclose the KH type-2 domain.

The protein belongs to the TRAFAC class TrmE-Era-EngA-EngB-Septin-like GTPase superfamily. Era GTPase family. In terms of assembly, monomer.

It is found in the cytoplasm. It localises to the cell inner membrane. Functionally, an essential GTPase that binds both GDP and GTP, with rapid nucleotide exchange. Plays a role in 16S rRNA processing and 30S ribosomal subunit biogenesis and possibly also in cell cycle regulation and energy metabolism. This is GTPase Era from Borrelia hermsii (strain HS1 / DAH).